A 477-amino-acid polypeptide reads, in one-letter code: Mitochondrial adenyl nucleotide antiporter SLC25A24 (477 aa).

Residues Met1–Asp174 form a regulatory N-terminal domain region. Residues Met1–Gln198 lie on the Mitochondrial intermembrane side of the membrane. One can recognise an EF-hand 1 domain in the interval Asp20 to Ser55. 19 residues coordinate Ca(2+): Asp33, Asn35, Asp37, Lys39, Glu44, Asp69, Asp71, Asp73, Glu80, Asp100, Asn102, Asp104, Arg106, Glu111, Asp136, Asp138, Thr140, Thr142, and Glu147. EF-hand domains lie at Glu87–Asn122 and Leu123–Glu158. The linker region stretch occupies residues Leu160–Lys169. The segment at Ile175–Lys477 is C-terminal transmembrane transporter domain. Solcar repeat units lie at residues Gly193–Leu279, Val287–Thr372, and Pro384–Gly472. A helical membrane pass occupies residues Leu199–Leu216. The Mitochondrial matrix portion of the chain corresponds to Asp217–Arg253. A helical transmembrane segment spans residues Gly254 to Tyr273. Topologically, residues Glu274–Gly296 are mitochondrial intermembrane. A helical membrane pass occupies residues Ser297–Met310. The Mitochondrial matrix portion of the chain corresponds to Glu311 to Lys346. A helical membrane pass occupies residues Gly347–Tyr366. At Glu367–Leu389 the chain is on the mitochondrial intermembrane side. A helical membrane pass occupies residues Leu390 to Leu407. The Mitochondrial matrix segment spans residues Ala408–Arg446. Residues Gly447 to Tyr466 form a helical membrane-spanning segment. Residues Glu467 to Lys477 are Mitochondrial intermembrane-facing.

Belongs to the mitochondrial carrier (TC 2.A.29) family. Monomer.

It is found in the mitochondrion inner membrane. It carries out the reaction Mg(2+)(out) + phosphate(in) + ATP(out) = Mg(2+)(in) + phosphate(out) + ATP(in). The catalysed reaction is ADP(out) + phosphate(in) + H(+)(out) = ADP(in) + phosphate(out) + H(+)(in). It catalyses the reaction AMP(out) + phosphate(in) = AMP(in) + phosphate(out). The enzyme catalyses phosphate(in) + ATP(out) + 2 H(+)(out) = phosphate(out) + ATP(in) + 2 H(+)(in). It carries out the reaction dADP(in) + ADP(out) = dADP(out) + ADP(in). The catalysed reaction is Mg(2+)(in) + ADP(out) + ATP(in) + H(+)(out) = Mg(2+)(out) + ADP(in) + ATP(out) + H(+)(in). It catalyses the reaction ADP(out) + diphosphate(in) = ADP(in) + diphosphate(out). The enzyme catalyses dAMP(in) + ADP(out) + H(+)(out) = dAMP(out) + ADP(in) + H(+)(in). It carries out the reaction 3'-AMP(in) + ADP(out) + H(+)(out) = 3'-AMP(out) + ADP(in) + H(+)(in). The catalysed reaction is dAMP(out) + phosphate(in) = dAMP(in) + phosphate(out). It catalyses the reaction 3'-AMP(out) + phosphate(in) = 3'-AMP(in) + phosphate(out). The enzyme catalyses dADP(out) + phosphate(in) + H(+)(out) = dADP(in) + phosphate(out) + H(+)(in). With respect to regulation, activated by an increase in cytosolic calcium levels that induce a conformational change of the N-terminal regulatory domain, uncapping the channel and allowing transport. Inhibited by bathophenanthroline, mersalyl, p-hydroxymercuribenzoate, bromcresol purple and tannic acid. Functionally, electroneutral antiporter that mediates the transport of adenyl nucleotides through the inner mitochondrial membrane. Originally identified as an ATP-magnesium/inorganic phosphate antiporter, it also acts as a broad specificity adenyl nucleotide antiporter. By regulating the mitochondrial matrix adenyl nucleotide pool could adapt to changing cellular energetic demands and indirectly regulate adenyl nucleotide-dependent metabolic pathways. This is Mitochondrial adenyl nucleotide antiporter SLC25A24 (slc25a24) from Danio rerio (Zebrafish).